The following is a 145-amino-acid chain: Histone H3-like centromeric protein A (145 aa).

Positions 1-19 (MPRHTSAHKRKPSTPRRRS) are enriched in basic residues. Residues 1–54 (MPRHTSAHKRKPSTPRRRSPPASLPPPAGSRTRRHSGPSGSSPRKKHKFRPGTR) are disordered. The residue at position 19 (serine 19) is a Phosphoserine. An H3-like region spans residues 51-145 (PGTRALMEIR…ARRIRGVEHM (95 aa)).

The protein belongs to the histone H3 family. As to quaternary structure, component of centromeric nucleosomes, where DNA is wrapped around a histone octamer core. The octamer contains two molecules each of H2A, H2B, CENPA and H4 assembled in one CENPA-H4 heterotetramer and two H2A-H2B heterodimers. CENPA modulates the DNA-binding characteristics of nucleosomes so that protruding DNA ends have higher flexibility than in nucleosomes containing conventional histone H3.

Its subcellular location is the nucleus. The protein localises to the chromosome. The protein resides in the centromere. Functionally, histone H3-like nucleosomal protein that is specifically found in centromeric nucleosomes. Replaces conventional H3 in the nucleosome core of centromeric chromatin that serves as an assembly site for the inner kinetochore. The presence of CENPA subtly modifies the nucleosome structure and the way DNA is wrapped around the nucleosome and gives rise to protruding DNA ends that are less well-ordered and rigid compared to nucleosomes containing histone H3. May serve as an epigenetic mark that propagates centromere identity through replication and cell division. Required for recruitment and assembly of kinetochore proteins, and as a consequence required for progress through mitosis, chromosome segregation and cytokinesis. The sequence is that of Histone H3-like centromeric protein A (cenpa) from Danio rerio (Zebrafish).